Here is a 120-residue protein sequence, read N- to C-terminus: uncharacterized protein (120 aa).

3 consecutive transmembrane segments (helical) span residues 20 to 39 (FFWP…CYLL), 52 to 71 (GSSL…LFSI), and 86 to 108 (ILVV…SIIG).

Its subcellular location is the cell membrane. This is an uncharacterized protein from Pasteurella multocida (strain Pm70).